Here is a 139-residue protein sequence, read N- to C-terminus: Cystatin (139 aa).

The first 23 residues, 1–23 (MAGARGCVVLLAAALMLVGAVLG), serve as a signal peptide directing secretion. Positions 76–80 (QLVSG) match the Secondary area of contact motif. 2 disulfides stabilise this stretch: cysteine 94–cysteine 104 and cysteine 118–cysteine 138. At serine 103 the chain carries Phosphoserine.

It belongs to the cystatin family.

It localises to the secreted. Functionally, this protein binds tightly to and inhibits a variety of thiol proteases including ficin, papain, and cathepsins B, C, H, and L. Although isolated from egg white, it is also present in serum. The protein is Cystatin of Gallus gallus (Chicken).